A 540-amino-acid polypeptide reads, in one-letter code: MAGGRSGSRELPETPTWAVAVVCAVLVLVSAAMEHGLHNLSHWFRRRQKKAMGDALDKIKAELMLLGFISLLLTVAQAPISKICIPKSAANILLPCKAGQDAIEEEAASGRRSLAGAGGGDYCSKFDGKVALMSAKSMHQLHIFIFVLAVFHVTYCIITMGLGRLKMKKWKKWESQTNSLEYQFAIDPSRFRFTHQTSFVKRHLGSFSSTPGLRWIVAFFRQFFGSVTKVDYLTMRQGFINAHLSQNSKFDFHKYIKRSLEDDFKVVVGISLPLWFVGILVLFLDIHGLGTLIWISFVPLIIVLLVGTKLEMVIMEMAQEIQDRATVIQGAPMVEPSNKYFWFNRPDWVLFFIHLTLFHNAFQMAHFVWTMATPGLKKCFHENIWLSIVEVIVGISLQVLCSYITFPLYALVTQMGSNMKKTIFEEQTMKALMNWRKKAMEKKKVRDADAFLAQMSVDFATPASSRSASPVHLLQDHRARSDDPPSPITVASPPAPEEDMYPVPAAAASRQLLDDPPDRRWMASSSADIADSDFSFSAQR.

Residues 1–16 (MAGGRSGSRELPETPT) lie on the Extracellular side of the membrane. The chain crosses the membrane as a helical span at residues 17-37 (WAVAVVCAVLVLVSAAMEHGL). The Cytoplasmic portion of the chain corresponds to 38–60 (HNLSHWFRRRQKKAMGDALDKIK). The helical transmembrane segment at 61 to 81 (AELMLLGFISLLLTVAQAPIS) threads the bilayer. The Extracellular segment spans residues 82–142 (KICIPKSAAN…MSAKSMHQLH (61 aa)). Residues 143 to 163 (IFIFVLAVFHVTYCIITMGLG) traverse the membrane as a helical segment. The Cytoplasmic portion of the chain corresponds to 164–265 (RLKMKKWKKW…IKRSLEDDFK (102 aa)). A helical membrane pass occupies residues 266 to 286 (VVVGISLPLWFVGILVLFLDI). Position 287 (H287) is a topological domain, extracellular. The chain crosses the membrane as a helical span at residues 288-308 (GLGTLIWISFVPLIIVLLVGT). Residues 309-347 (KLEMVIMEMAQEIQDRATVIQGAPMVEPSNKYFWFNRPD) are Cytoplasmic-facing. The chain crosses the membrane as a helical span at residues 348 to 368 (WVLFFIHLTLFHNAFQMAHFV). Over 369-383 (WTMATPGLKKCFHEN) the chain is Extracellular. The chain crosses the membrane as a helical span at residues 384 to 404 (IWLSIVEVIVGISLQVLCSYI). Residues 405–540 (TFPLYALVTQ…DSDFSFSAQR (136 aa)) lie on the Cytoplasmic side of the membrane. The calmodulin-binding stretch occupies residues 426–447 (EQTMKALMNWRKKAMEKKKVRD). The disordered stretch occupies residues 468-526 (ASPVHLLQDHRARSDDPPSPITVASPPAPEEDMYPVPAAAASRQLLDDPPDRRWMASSS). Basic and acidic residues-rich tracts occupy residues 474-483 (LQDHRARSDD) and 512-521 (LLDDPPDRRW).

This sequence belongs to the MLO family.

It is found in the membrane. In terms of biological role, may be involved in modulation of pathogen defense and leaf cell death. Activity seems to be regulated by Ca(2+)-dependent calmodulin binding and seems not to require heterotrimeric G proteins. In Oryza sativa subsp. indica (Rice), this protein is MLO protein homolog 1 (MLO1).